Here is a 1936-residue protein sequence, read N- to C-terminus: Potassium channel K1 (1936 aa).

6 helical membrane-spanning segments follow: residues 175 to 195 (IIIL…YILL), 598 to 618 (VWII…LWAA), 643 to 663 (GYIE…GLYF), 670 to 690 (YIFS…SFIM), 701 to 721 (TYWF…AEST), and 734 to 754 (IIII…SGIM). Residues 772-788 (FVYFGVITMSTVGYGDY) constitute an intramembrane region (pore-forming). Residues 791 to 811 (VTPAGKCLTMFIIVTCFTFVG) traverse the membrane as a helical segment. Residues 1141–1185 (DTSSMINYKSKSRVNYKMVKGTKNEFIRNQNYNINSIYYANNDNM) are a coiled coil.

The protein localises to the membrane. It carries out the reaction K(+)(in) = K(+)(out). Partially inhibited by Ba(2+) and quinine. Probably insensitive to tetraethylammonium (TEA). Its function is as follows. Likely a predominant potassium channel in the erythrocytic stages of parasites. Mediates transmembrane potassium transport. Required for the development of oocysts in the mosquito midgut. This chain is Potassium channel K1, found in Plasmodium berghei (strain Anka).